Here is a 108-residue protein sequence, read N- to C-terminus: Cuticle protein AM1199 (108 aa).

The residue at position 1 (glutamine 1) is a Pyrrolidone carboxylic acid. In terms of domain architecture, Chitin-binding type R&amp;R spans 26–91; the sequence is DGNFGYDFET…AESPLIPTPH (66 aa). Residue threonine 89 is glycosylated (O-linked (HexNAc) threonine).

In terms of tissue distribution, arthrodial membrane.

The chain is Cuticle protein AM1199 from Cancer pagurus (Rock crab).